Reading from the N-terminus, the 1218-residue chain is Coatomer subunit alpha-2 (1218 aa).

WD repeat units follow at residues 7-48, 49-88, 91-132, 133-172, 202-241, 246-285, 288-326, and 363-404; these read TKSN…DRFD, EHDGPVRGVHFHATQPLFVSGGDDYKIKVWNYKTHRCLFT, GHLD…AVLT, GHNHYVMCASFHPKEDLVVSASLDQTVRVWDISALRKKSV, GHDRGVNWASFHPTLPLIVSGADDRQVKIWRMNDTKAWEV, GHMNNVSCVMFHAKQDIIVSNSEDKSIRIWDATKRTGIQT, REHDRFWILSAHPEMNLLAAGHDSGMIVFKLERERPAFS, and SLNQ…AGRA. The segment at 855-876 is disordered; the sequence is MANGGDGFDAEEGEANEEDGEE. The span at 862–876 shows a compositional bias: acidic residues; it reads FDAEEGEANEEDGEE.

As to quaternary structure, oligomeric complex that consists of at least the alpha, beta, beta', gamma, delta, epsilon and zeta subunits.

Its subcellular location is the cytoplasm. The protein localises to the golgi apparatus membrane. The protein resides in the cytoplasmic vesicle. It localises to the COPI-coated vesicle membrane. Functionally, the coatomer is a cytosolic protein complex that binds to dilysine motifs and reversibly associates with Golgi non-clathrin-coated vesicles, which further mediate biosynthetic protein transport from the ER, via the Golgi up to the trans Golgi network. Coatomer complex is required for budding from Golgi membranes, and is essential for the retrograde Golgi-to-ER transport of dilysine-tagged proteins. The sequence is that of Coatomer subunit alpha-2 from Oryza sativa subsp. japonica (Rice).